Consider the following 132-residue polypeptide: Small ribosomal subunit protein uS8c (132 aa).

The protein belongs to the universal ribosomal protein uS8 family. As to quaternary structure, part of the 30S ribosomal subunit.

The protein localises to the plastid. The protein resides in the chloroplast. Functionally, one of the primary rRNA binding proteins, it binds directly to 16S rRNA central domain where it helps coordinate assembly of the platform of the 30S subunit. The chain is Small ribosomal subunit protein uS8c (rps8) from Angiopteris evecta (Mule's foot fern).